A 373-amino-acid chain; its full sequence is Tomoregulin-1 (373 aa).

The N-terminal stretch at methionine 1–alanine 36 is a signal peptide. Topologically, residues serine 37–valine 323 are extracellular. N-linked (GlcNAc...) asparagine glycosylation occurs at asparagine 56. Residues alanine 91–serine 138 enclose the Kazal-like 1 domain. Disulfide bonds link cysteine 92–cysteine 122, cysteine 96–cysteine 115, and cysteine 104–cysteine 136. N-linked (GlcNAc...) asparagine glycosylation occurs at asparagine 140. Residues asparagine 140–lysine 162 form a disordered region. The Kazal-like 2 domain occupies valine 182 to aspartate 230. 6 disulfide bridges follow: cysteine 183-cysteine 214, cysteine 187-cysteine 207, cysteine 196-cysteine 228, cysteine 268-cysteine 281, cysteine 276-cysteine 292, and cysteine 294-cysteine 303. Positions serine 264–glutamate 304 constitute an EGF-like domain. Residues leucine 324–isoleucine 344 traverse the membrane as a helical segment. At threonine 345–valine 373 the chain is on the cytoplasmic side. The disordered stretch occupies residues asparagine 352–valine 373. Over residues glutamine 359–valine 373 the composition is skewed to polar residues.

This sequence belongs to the tomoregulin family. In terms of assembly, may interact with ST14.

Its subcellular location is the cell membrane. Its function is as follows. Neuron-specific restriction factor that prevents herpes simplex virus 1 (HHV-1) infection in the brain by blocking viral entry. Also able to restrict herpes simplex virus 2 (HHV-2) infection, although to a lesser extent. Acts by preventing the association between the viral glycoprotein D (gD) and its cell surface receptor NECTIN1, thereby inhibiting fusion of the virus and the cell membrane. Also able to prevent the association between the viral glycoprotein B (gB) and MYH9/NMMHC-IIA and MYH10/NMMHC-IIB receptors. The sequence is that of Tomoregulin-1 (Tmeff1) from Rattus norvegicus (Rat).